The chain runs to 244 residues: Uridylate kinase (244 aa).

12 to 15 (KLSG) provides a ligand contact to ATP. Residues 20–25 (GERGVG) form an involved in allosteric activation by GTP region. G54 is a binding site for UMP. Residues G55 and R59 each coordinate ATP. Residues D74 and 135–142 (IGSPYFST) each bind UMP. N163, Y169, and D172 together coordinate ATP.

It belongs to the UMP kinase family. In terms of assembly, homohexamer.

The protein resides in the cytoplasm. The catalysed reaction is UMP + ATP = UDP + ADP. It participates in pyrimidine metabolism; CTP biosynthesis via de novo pathway; UDP from UMP (UMPK route): step 1/1. Its activity is regulated as follows. Allosterically activated by GTP. Inhibited by UTP. Catalyzes the reversible phosphorylation of UMP to UDP. In Streptococcus suis (strain 98HAH33), this protein is Uridylate kinase.